Reading from the N-terminus, the 224-residue chain is 7-cyano-7-deazaguanine synthase (224 aa).

ATP is bound at residue 12-22 (LSGGLDSSTVT). Residues C193, C201, C204, and C207 each contribute to the Zn(2+) site.

It belongs to the QueC family. Zn(2+) serves as cofactor.

It catalyses the reaction 7-carboxy-7-deazaguanine + NH4(+) + ATP = 7-cyano-7-deazaguanine + ADP + phosphate + H2O + H(+). Its pathway is purine metabolism; 7-cyano-7-deazaguanine biosynthesis. In terms of biological role, catalyzes the ATP-dependent conversion of 7-carboxy-7-deazaguanine (CDG) to 7-cyano-7-deazaguanine (preQ(0)). The polypeptide is 7-cyano-7-deazaguanine synthase (Prochlorococcus marinus (strain MIT 9215)).